A 490-amino-acid polypeptide reads, in one-letter code: Betaine aldehyde dehydrogenase (490 aa).

Residue Asp93 coordinates K(+). 150–152 is an NAD(+) binding site; the sequence is GAW. Lys162 serves as the catalytic Charge relay system. 176-179 serves as a coordination point for NAD(+); the sequence is KPSE. Residue Val180 participates in K(+) binding. NAD(+) is bound at residue 230–233; it reads GIAS. K(+) is bound at residue Leu246. The active-site Proton acceptor is Glu252. NAD(+) contacts are provided by Gly254, Cys286, and Glu387. The active-site Nucleophile is the Cys286. Residue Cys286 is modified to Cysteine sulfenic acid (-SOH). Lys457 and Gly460 together coordinate K(+). The active-site Charge relay system is Glu464.

The protein belongs to the aldehyde dehydrogenase family. In terms of assembly, dimer of dimers. Requires K(+) as cofactor.

The enzyme catalyses betaine aldehyde + NAD(+) + H2O = glycine betaine + NADH + 2 H(+). The protein operates within amine and polyamine biosynthesis; betaine biosynthesis via choline pathway; betaine from betaine aldehyde: step 1/1. Its function is as follows. Involved in the biosynthesis of the osmoprotectant glycine betaine. Catalyzes the irreversible oxidation of betaine aldehyde to the corresponding acid. The sequence is that of Betaine aldehyde dehydrogenase from Pectobacterium carotovorum subsp. carotovorum (strain PC1).